Consider the following 337-residue polypeptide: MALQALHSSGVGLRRILAHFPEDLSLAFAYGSAVYRQAGPSAHQENPMLDLVFTVDDPVAWHAMNLKKNWSHYSLLKLLGPRIISSVQNNYGAGVYFNPLIMCDGKLIKYGVISTGTLIEDLLNWNNLYIAGRLQKPVKIVSMNESTVLRAALDKNLKSAVTTACLMLPESFSEEDLFIEIAGLSYSGDFRMVIGEEKAKVLNIVKPNVVHFRELYESILQKDPQMVYKMHQGQLEIDKSPEGQFTQLMTLPRTLQQHINHIMDPPGRNRDVEETLLQVAQDPDCGDVVRLAVSSIVRPSSIRQSTKGLFTAGVKKSVIYSSRKLNKMWKGWVRKTS.

It belongs to the TAM41 family. It depends on Mg(2+) as a cofactor. Brain and liver.

The protein localises to the mitochondrion inner membrane. The enzyme catalyses a 1,2-diacyl-sn-glycero-3-phosphate + CTP + H(+) = a CDP-1,2-diacyl-sn-glycerol + diphosphate. It functions in the pathway phospholipid metabolism; CDP-diacylglycerol biosynthesis; CDP-diacylglycerol from sn-glycerol 3-phosphate: step 3/3. Functionally, catalyzes the conversion of phosphatidic acid (PA) to CDP-diacylglycerol (CDP-DAG), an essential intermediate in the synthesis of phosphatidylglycerol, cardiolipin and phosphatidylinositol. The protein is Phosphatidate cytidylyltransferase, mitochondrial (Tamm41) of Rattus norvegicus (Rat).